Here is a 228-residue protein sequence, read N- to C-terminus: Vesicle transport protein SEC20 (228 aa).

The Cytoplasmic segment spans residues 1–199 (MAAPQDVHVR…LITKYNRREL (199 aa)). Residues 37–90 (LSELTELNTKVKEKFQQLKQRIQELEQSAREQDKESEKQLLLQEVENHKKQMLS) adopt a coiled-coil conformation. A helical; Anchor for type IV membrane protein membrane pass occupies residues 200–220 (TDKLLIFLALALFLATVLYIV). The Lumenal portion of the chain corresponds to 221 to 228 (KKRLFPFL).

The protein belongs to the SEC20 family. Component of a SNARE complex consisting of STX18, USE1L, BNIP1/SEC20L and SEC22B. Interacts directly with STX18, RINT1/TIP20L and NAPA. Interacts with ZW10 through RINT1. Interacts with BCL2. Interacts with RNF186. Interacts with RNF185. Interacts with SQSTM1; increased by 'Lys-63'-linked polyubiquitination of BNIP1. Polyubiquitinated. 'Lys-63'-linked polyubiquitination by RNF185 increases the interaction with the autophagy receptor SQSTM1. Undergoes 'Lys-29'- and 'Lys-63'-linked polyubiquitination by RNF186 that may regulate BNIP1 localization to the mitochondrion.

It is found in the endoplasmic reticulum membrane. The protein localises to the mitochondrion membrane. In terms of biological role, as part of a SNARE complex may be involved in endoplasmic reticulum membranes fusion and be required for the maintenance of endoplasmic reticulum organization. Also plays a role in apoptosis. It is for instance required for endoplasmic reticulum stress-induced apoptosis. As a substrate of RNF185 interacting with SQSTM1, might also be involved in mitochondrial autophagy. The polypeptide is Vesicle transport protein SEC20 (Mus musculus (Mouse)).